Reading from the N-terminus, the 252-residue chain is Body wall muscle protein HR-29 (252 aa).

Serine 2 is subject to N-acetylserine. 3 repeat units span residues 37–55 (RDWM…RDLS), 56–74 (QDWM…RDLS), and 75–93 (QDWM…RNLS). Residues 37-93 (RDWMTTPYSSTGIGRRDLSQDWMTTPYTPAGVGRRDLSQDWMTTPYTSKGIGSRNLS) form a 3 X 19 AA approximate tandem repeats region. Residues 138–249 (ISVEHEGKTT…KKTAVPVTVE (112 aa)) enclose the sHSP domain.

It belongs to the small heat shock protein (HSP20) family. As to quaternary structure, exists as an oligomer.

Its subcellular location is the membrane. May be a component of myofibrils where it acts as a stabilizer. This Halocynthia roretzi (Sea squirt) protein is Body wall muscle protein HR-29.